Consider the following 72-residue polypeptide: DNA-directed RNA polymerase subunit omega (72 aa).

It belongs to the RNA polymerase subunit omega family. The RNAP catalytic core consists of 2 alpha, 1 beta, 1 beta' and 1 omega subunit. When a sigma factor is associated with the core the holoenzyme is formed, which can initiate transcription.

The enzyme catalyses RNA(n) + a ribonucleoside 5'-triphosphate = RNA(n+1) + diphosphate. In terms of biological role, promotes RNA polymerase assembly. Latches the N- and C-terminal regions of the beta' subunit thereby facilitating its interaction with the beta and alpha subunits. The polypeptide is DNA-directed RNA polymerase subunit omega (Staphylococcus aureus (strain Mu3 / ATCC 700698)).